The sequence spans 1117 residues: Lid2 complex component snt2 (1117 aa).

Positions 89–208 constitute a BAH domain; it reads ELIQPNDFVL…QNINKVFDVV (120 aa). A Phorbol-ester/DAG-type zinc finger spans residues 227–282; sequence NYDFIVTEYGKGRALLNEPSNCKVCKKWCAFDFSVQCADCKKYYHMDCVVPPLLKK. Residues 245–297 form a PHD-type 1 zinc finger; that stretch reads PSNCKVCKKWCAFDFSVQCADCKKYYHMDCVVPPLLKKPPHGFGWTCATCSFA. Residues 361–380 form a disordered region; sequence SSRNLHQQSRKSLDENKPNS. The segment at 798–882 adopts a PHD-type 2 zinc-finger fold; the sequence is KKCCALCGIV…SWACLSCRSN (85 aa). The C2HC pre-PHD-type zinc-finger motif lies at 890–925; that stretch reads DNHCVLCLQSASHSLMKKTVEGNWVHLICASWTPDV. A PHD-type 3; degenerate zinc finger spans residues 948 to 1002; sequence KKCEVCGNSFGVCVSSPNSGLTSHVTCAEKANWYLGFEFVKQDQSPFSMLSNLKS.

In terms of assembly, component of the Lid2 complex composed of ash2, jmj3, lid2, sdc1 and snt2.

It localises to the nucleus. This chain is Lid2 complex component snt2 (snt2), found in Schizosaccharomyces pombe (strain 972 / ATCC 24843) (Fission yeast).